Consider the following 434-residue polypeptide: Trigger factor (434 aa).

The PPIase FKBP-type domain occupies 161-246 (EDRATLDFTG…LKKVEVRELP (86 aa)).

It belongs to the FKBP-type PPIase family. Tig subfamily.

The protein resides in the cytoplasm. It carries out the reaction [protein]-peptidylproline (omega=180) = [protein]-peptidylproline (omega=0). Functionally, involved in protein export. Acts as a chaperone by maintaining the newly synthesized protein in an open conformation. Functions as a peptidyl-prolyl cis-trans isomerase. This Yersinia pseudotuberculosis serotype O:1b (strain IP 31758) protein is Trigger factor.